The primary structure comprises 422 residues: Probable protein phosphatase 2C 43 (422 aa).

Residues Ser117–Phe393 enclose the PPM-type phosphatase domain. Mn(2+) is bound by residues Asp163, Gly164, Asp341, and Asp384.

It belongs to the PP2C family. The cofactor is Mg(2+). It depends on Mn(2+) as a cofactor.

The catalysed reaction is O-phospho-L-seryl-[protein] + H2O = L-seryl-[protein] + phosphate. It carries out the reaction O-phospho-L-threonyl-[protein] + H2O = L-threonyl-[protein] + phosphate. This Arabidopsis thaliana (Mouse-ear cress) protein is Probable protein phosphatase 2C 43.